The following is a 232-amino-acid chain: MDNLVDIDEDGTQEKLSVNSTPYQTQECVLYGSIFAKNVPDLERRLAGLCDPGCEEFFEHEMSFSLRSSGIMDIKTDIKLRRRFRTEHRIQNYWQLKYIGVPEPDQKCPTIVRKEISSLVHSQDMMTYAKSLGLRMDYEYMTQGKLWTKGNIKILHSILTSTSRAGTYDSNSIKSVSDSALVEISISLPESAEYMPAAKSLRDFADQLMPLVNMEKVDYWKKMFPAQAAPRR.

This sequence belongs to the Mediator complex subunit 18 family. Component of the Mediator complex.

The protein resides in the nucleus. In terms of biological role, component of the Mediator complex, a coactivator involved in the regulated transcription of nearly all RNA polymerase II-dependent genes. Mediator functions as a bridge to convey information from gene-specific regulatory proteins to the basal RNA polymerase II transcription machinery. Mediator is recruited to promoters by direct interactions with regulatory proteins and serves as a scaffold for the assembly of a functional preinitiation complex with RNA polymerase II and the general transcription factors. The sequence is that of Mediator of RNA polymerase II transcription subunit 18 (mdt-18) from Caenorhabditis elegans.